Here is a 425-residue protein sequence, read N- to C-terminus: SRRM2 protein homolog rsr-2 (425 aa).

The CWF21 domain maps to 57-100 (MDHNRKRQIEVKCTEFEMLLEDKGLDDEDIERKVGEYRKNLLKQ). 2 disordered regions span residues 109-131 (DEEL…RDKM) and 161-425 (ESEL…SDSE). A compositionally biased stretch (basic and acidic residues) spans 164–178 (LPQKDDKEKLLETLR). A compositionally biased stretch (low complexity) spans 189 to 202 (SSSSSSSSSSSSES). Basic residues predominate over residues 210–221 (RKDRKKKEKKQK). 2 stretches are compositionally biased toward basic and acidic residues: residues 222–251 (LKEM…KEEP) and 259–305 (DSRK…EDRT). The segment covering 306–317 (VRRRSPERRRQQ) has biased composition (basic residues). 3 stretches are compositionally biased toward basic and acidic residues: residues 321–332 (SVERRKSPQRRD), 355–366 (SRMDELEVKQEP), and 383–398 (RVEK…RKSS). Low complexity predominate over residues 399–425 (SESSSGSSDSDSSSDSSSSSDSSSDSE).

Belongs to the CWC21 family. In terms of assembly, interacts with RNA polymerase II subunit ama-1, binding to both hyperphosphorylated and hypophosphorylated forms, but more strongly when ama-1 is phosphorylated at 'Ser-5' of the C-terminal heptapeptide repeat. Interacts with pre-mRNA-processing factor prp-19. May also interact with pre-mRNA-splicing factor 8 homolog prp-8. As to expression, expressed in the proximal germline, but not in the most distal part where mitosis takes place. May be expressed ubiquitously in somatic cells.

Its subcellular location is the nucleus. It localises to the chromosome. It is found in the nuclear body. In terms of biological role, plays a role in pre-mRNA splicing as component of the spliceosome. Involved in modulating global transcription, probably acting via interaction with RNA polymerase II. Influences the chromatin distribution and phosphorylation state of RNA polymerase II subunit ama-1. Involved in regulating the germline sex determination pathway. The polypeptide is SRRM2 protein homolog rsr-2 (Caenorhabditis elegans).